Here is a 215-residue protein sequence, read N- to C-terminus: Uracil phosphoribosyltransferase (215 aa).

5-phospho-alpha-D-ribose 1-diphosphate is bound by residues Arg77, Arg102, and Asp129–Ser137. Uracil is bound by residues Ile193 and Gly198–Ala200. Asp199 lines the 5-phospho-alpha-D-ribose 1-diphosphate pocket.

It belongs to the UPRTase family. It depends on Mg(2+) as a cofactor.

It carries out the reaction UMP + diphosphate = 5-phospho-alpha-D-ribose 1-diphosphate + uracil. It functions in the pathway pyrimidine metabolism; UMP biosynthesis via salvage pathway; UMP from uracil: step 1/1. With respect to regulation, allosterically activated by GTP. Its function is as follows. Catalyzes the conversion of uracil and 5-phospho-alpha-D-ribose 1-diphosphate (PRPP) to UMP and diphosphate. The protein is Uracil phosphoribosyltransferase of Corynebacterium urealyticum (strain ATCC 43042 / DSM 7109).